Here is a 177-residue protein sequence, read N- to C-terminus: Large ribosomal subunit protein uL16m (177 aa).

The protein belongs to the universal ribosomal protein uL16 family.

The protein resides in the mitochondrion. This is Large ribosomal subunit protein uL16m (RPL16) from Brassica napus (Rape).